We begin with the raw amino-acid sequence, 627 residues long: Pheromone B alpha 2 receptor (627 aa).

Residues 1–7 lie on the Extracellular side of the membrane; sequence MLDPTYP. The chain crosses the membrane as a helical span at residues 8 to 28; that stretch reads AFPIFAFLGIVCCLVPLPWHL. Topologically, residues 29–35 are cytoplasmic; the sequence is QSWNSGT. A helical membrane pass occupies residues 36–56; the sequence is CFLMIWTAVACLNMFVNSIIW. Over 57–69 the chain is Extracellular; it reads KDHAQNVAPVWCE. The helical transmembrane segment at 70–90 threads the bilayer; it reads ISIRITLGASVGIPASSLCIV. The Cytoplasmic segment spans residues 91–102; the sequence is RRLYSIAKKFRA. The helical transmembrane segment at 103–123 threads the bilayer; the sequence is VMVDALICVLFPILYIILQIV. At 124 to 150 the chain is on the extracellular side; it reads VQGHRFNILENIGCFPAIINTPLTYPL. A helical membrane pass occupies residues 151 to 171; sequence TFMWPVLIGVISFIYSTLALI. The Cytoplasmic segment spans residues 172 to 197; it reads QFNRHRLQFTQFLHSNSTLSVSRYLR. Residues 198–218 traverse the membrane as a helical segment; that stretch reads LMALAMTEMMCTTPMGVFVII. Topologically, residues 219–260 are extracellular; sequence LNAKATPVSPYVSWAVTHYGYGRIDQVPAIIWRSNRLLVASY. Residues 261–281 traverse the membrane as a helical segment; sequence ELTRWSSPAIALIFFFYFGFA. Residues 282–627 are Cytoplasmic-facing; sequence QEARRNYAAA…ASPRTHRASV (346 aa). Disordered regions lie at residues 363-405, 479-505, and 518-627; these read LPRP…SSPI, TVPQHNTADEPASPALPDTPSSCSSSA, and LPST…RASV. Residues 372-387 show a composition bias toward low complexity; the sequence is SSSGFSSSDSTRFGSS. Polar residues-rich tracts occupy residues 519 to 533 and 545 to 555; these read PSTTDVTRGTGSLPT and SLSQLFGISSM. The span at 569-607 shows a compositional bias: low complexity; the sequence is ATGTASPTTTAPAPASTTIAPASATMAPATTTTAPTTIA.

It belongs to the G-protein coupled receptor 4 family.

The protein localises to the cell membrane. Functionally, receptor for the BAP2 pheromone, a prenylated mating factor. The receptor/pheromone interaction may have a role in the fusion of clamp cells. The chain is Pheromone B alpha 2 receptor (BAR2) from Schizophyllum commune (Split gill fungus).